We begin with the raw amino-acid sequence, 277 residues long: Ubiquitin-conjugating enzyme suppressor 1 (277 aa).

Residues 254–277 (RTLACPDETNDNRGSEHYTKRKKI) form a disordered region.

In terms of biological role, not known; its elevated expression suppresses the conditional cell cycle defects associated with UBC3/CDC34 mutations. The protein is Ubiquitin-conjugating enzyme suppressor 1 (UBS1) of Saccharomyces cerevisiae (strain ATCC 204508 / S288c) (Baker's yeast).